The following is a 132-amino-acid chain: Large ribosomal subunit protein uL14 (132 aa).

Belongs to the universal ribosomal protein uL14 family. In terms of assembly, part of the 50S ribosomal subunit. Forms a cluster with proteins L3 and L24e, part of which may contact the 16S rRNA in 2 intersubunit bridges.

Binds to 23S rRNA. Forms part of two intersubunit bridges in the 70S ribosome. The sequence is that of Large ribosomal subunit protein uL14 from Methanosphaera stadtmanae (strain ATCC 43021 / DSM 3091 / JCM 11832 / MCB-3).